A 94-amino-acid polypeptide reads, in one-letter code: CRISPR-associated endoribonuclease Cas2 (94 aa).

D11 lines the Mg(2+) pocket.

The protein belongs to the CRISPR-associated endoribonuclease Cas2 protein family. Homodimer, forms a heterotetramer with a Cas1 homodimer. It depends on Mg(2+) as a cofactor.

Its function is as follows. CRISPR (clustered regularly interspaced short palindromic repeat), is an adaptive immune system that provides protection against mobile genetic elements (viruses, transposable elements and conjugative plasmids). CRISPR clusters contain sequences complementary to antecedent mobile elements and target invading nucleic acids. CRISPR clusters are transcribed and processed into CRISPR RNA (crRNA). Functions as a ssRNA-specific endoribonuclease. Involved in the integration of spacer DNA into the CRISPR cassette. This Thermus thermophilus (strain ATCC 27634 / DSM 579 / HB8) protein is CRISPR-associated endoribonuclease Cas2.